A 254-amino-acid polypeptide reads, in one-letter code: GPI alpha-1,4-mannosyltransferase I, stabilizing subunit (254 aa).

Positions 1–22 (MAAGAVAWLLLWAAWLVGRLAA) are cleaved as a signal peptide. Residues 23 to 226 (DFSDAPFSAG…PVGLTIHTSL (204 aa)) are Lumenal-facing. Residue N211 is glycosylated (N-linked (GlcNAc...) asparagine). A helical membrane pass occupies residues 227–247 (VCSVTLLITILCSTLILLAVF). At 248-254 (KYGHFSL) the chain is on the cytoplasmic side.

This sequence belongs to the PIGX family. Part of the glycosylphosphatidylinositol-mannosyltransferase I complex that is composed of PIGM and PIGX. Interacts with PIGM; PIGX stabilizes PIGM.

It is found in the endoplasmic reticulum membrane. It participates in glycolipid biosynthesis; glycosylphosphatidylinositol-anchor biosynthesis. In terms of biological role, stabilizing subunit of the glycosylphosphatidylinositol-mannosyltransferase I complex which catalyzes the transfer of the first mannose, via an alpha-1,4 bond from a dolichol-phosphate-mannose (Dol-P-Man) to the glucosaminyl acyl phosphatidylinositol (GlcN-(acyl)PI) intermediate to generate alpha-D-Man-(1-&gt;4)-alpha-D-GlcN-(1-&gt;6)-(1-radyl,2-acyl-sn-glycero-3-phospho)-2-acyl-inositol and participates in the sixth step of the glycosylphosphatidylinositol-anchor biosynthesis. Probably acts by stabilizing the mannosyltransferase PIGM. The protein is GPI alpha-1,4-mannosyltransferase I, stabilizing subunit of Mus musculus (Mouse).